Reading from the N-terminus, the 464-residue chain is E3 ubiquitin-protein ligase ITT1 (464 aa).

Positions 176–455 (SNYHCCICME…EAYSGCYGRL (280 aa)) are TRIAD supradomain. Positions 180, 183, 207, 210, 290, 300, 316, 319, 402, and 405 each coordinate Zn(2+). The segment at 180-236 (CCICMEMEKGVRMIKLPCENANVEHYLCRGCAKSYFTAMIQENRISSVRCPQCEYKE) adopts an RING-type 1 zinc-finger fold. The segment at 267–338 (DTELCERYEK…HAWHGYNNKC (72 aa)) adopts an IBR-type zinc-finger fold. The RING-type 2; atypical zinc finger occupies 402–431 (CPKCKVVVERSEGCNKMKCEVCGTLFCFIC). Cys415 is a catalytic residue. 6 residues coordinate Zn(2+): Cys420, Cys423, Cys428, Cys431, His443, and Cys451.

Belongs to the RBR family. RNF14 subfamily. As to quaternary structure, interacts with translation release factors eRF1 (SUP45) and eRF3 (SUP35) in vitro.

It carries out the reaction [E2 ubiquitin-conjugating enzyme]-S-ubiquitinyl-L-cysteine + [acceptor protein]-L-lysine = [E2 ubiquitin-conjugating enzyme]-L-cysteine + [acceptor protein]-N(6)-ubiquitinyl-L-lysine.. It functions in the pathway protein modification; protein ubiquitination. In terms of biological role, E3 ubiquitin-protein ligase involved in translation quality control. Involved in the rescue of stalled ribosomes by promoting ubiquitination and degradation of proteins on stalled ribosomes. Specifically required to resolve RNA-protein cross-links caused by reactive aldehydes, which trigger translation stress by stalling ribosomes: acts by catalying 'Lys-6'-linked ubiquitination of RNA-protein cross-links, leading to their degradation. Interacts with the translation termination factors eRF1 (SUP45) and eRF3 (SUP35); overexpression decreases the efficiency of translation termination. The chain is E3 ubiquitin-protein ligase ITT1 from Saccharomyces cerevisiae (strain ATCC 204508 / S288c) (Baker's yeast).